Consider the following 250-residue polypeptide: Pre-protein VI (250 aa).

Residues 1 to 33 (MEDINFASLAPRHGSRPFMGNWQDIGTSNMSGG) constitute a propeptide that is removed on maturation. Positions 34-54 (AFSWGSLWSGIKNFGSTIKNY) are amphipathic alpha-helix essential for membrane lytic activity. The segment at 36-53 (SWGSLWSGIKNFGSTIKN) is involved in endosomal membrane lysis. Residues 48-74 (GSTIKNYGSKAWNSSTGQMLRDKLKEQ) are interaction with hexon protein. The short motif at 67-76 (LRDKLKEQNF) is the Nuclear export signal element. The interval 103 to 147 (INSKLDPRPPVEEPPPAVETVSPEGRGEKRPRPDREETLVTQIDE) is disordered. At serine 124 the chain carries Phosphoserine; by host. Positions 127 to 140 (GRGEKRPRPDREET) are enriched in basic and acidic residues. The Nuclear localization signal signature appears at 131-135 (KRPRP). Residue threonine 143 is modified to Phosphothreonine; by host. The PPXY motif motif lies at 148–151 (PPSY). Residues 206–220 (PSRASLRRAASGPRS) are compositionally biased toward low complexity. The disordered stretch occupies residues 206 to 226 (PSRASLRRAASGPRSMRPVAS). The short motif at 231-242 (STLNSIVGLGVQ) is the Nuclear export signal element. Positions 233–239 (LNSIVGL) are interaction with hexon protein. Residues 240–250 (GVQSLKRRRCF) are binds to importin alpha/beta, involved in hexon nuclear import. Residues 245-248 (KRRR) carry the Nuclear localization signal motif.

It belongs to the adenoviridae protein VI family. In terms of assembly, interacts with hexon protein; this interaction allows nuclear import of hexon trimers and possibly pre-capsid assembly. Interacts (via C-terminal NLS) with importin alpha/beta. As to quaternary structure, interacts (via PPxY motif) with host NEDD4 ubiquitine ligase; this interaction might play a role in virus intracellular transport during entry. Part of a complex composed of the core-capsid bridging protein, the endosome lysis protein VI and the hexon-linking protein VIII; these interactions bridge the virus core to the capsid. Interacts with peripentonal hexons; this interaction stabilizes the capsid by gluing two peripentonal hexons together and joining them with an adjacent group-of-nine hexon. Heterodimer with the viral protease; disulfide-linked. Interacts with the viral protease. Ubiquitinated by Nedd4 following partial capsid disassembly; which might play a role in intracellular virus movement during entry. In terms of processing, contains the major nuclear import and export signals. Proteolytically removed during virion maturation. The processing of the C-terminus turns the precursor into a mature viral structural protein and abrogates its ability to promote hexon import and act as a potential chaperone protein.

It localises to the host nucleus. The protein localises to the host cytoplasm. The protein resides in the virion. Its function is as follows. During virus assembly, promotes hexon trimers nuclear import through nuclear pore complexes via an importin alpha/beta-dependent mechanism. By analogy to herpesviruses capsid assembly, might act as a chaperone to promote the formation of the icosahedral capsid. In terms of biological role, structural component of the virion that provides increased stability to the particle shell through its interaction with the core-capsid bridging protein and the hexon-linking protein VIII. Fibers shedding during virus entry into host cell allows the endosome lysis protein to be exposed as a membrane-lytic peptide. Exhibits pH-independent membrane fragmentation activity and probably mediates viral rapid escape from host endosome via organellar membrane lysis. It is not clear if it then remains partially associated with the capsid and involved in the intracellular microtubule-dependent transport of capsid to the nucleus, or if it is lost during endosomal penetration. Functionally, cofactor that activates the viral protease. Binds to viral protease in a 1:1 ratio. The chain is Pre-protein VI from Human adenovirus C serotype 2 (HAdV-2).